A 108-amino-acid polypeptide reads, in one-letter code: DNA-binding protein HBbu (108 aa).

It belongs to the bacterial histone-like protein family.

In terms of biological role, histone-like DNA-binding protein which is capable of wrapping DNA to stabilize it, and thus to prevent its denaturation under extreme environmental conditions. The polypeptide is DNA-binding protein HBbu (hbb) (Borreliella afzelii (Borrelia afzelii)).